The primary structure comprises 203 residues: Ribosomal RNA small subunit methyltransferase G (203 aa).

Residues Gly-73, Leu-78, 124–125 (VE), and Arg-138 each bind S-adenosyl-L-methionine.

Belongs to the methyltransferase superfamily. RNA methyltransferase RsmG family.

The protein resides in the cytoplasm. It carries out the reaction guanosine(527) in 16S rRNA + S-adenosyl-L-methionine = N(7)-methylguanosine(527) in 16S rRNA + S-adenosyl-L-homocysteine. Specifically methylates the N7 position of guanine in position 527 of 16S rRNA. In Haemophilus ducreyi (strain 35000HP / ATCC 700724), this protein is Ribosomal RNA small subunit methyltransferase G.